The primary structure comprises 820 residues: Trimethylamine-N-oxide reductase (820 aa).

Residues 1 to 33 (MAITRRSFLKGVATTSAASVIGPSLLASASANA) constitute a signal peptide (tat-type signal). Ser-179 serves as a coordination point for Mo-bis(molybdopterin guanine dinucleotide).

Belongs to the prokaryotic molybdopterin-containing oxidoreductase family. Mo-bis(molybdopterin guanine dinucleotide) is required as a cofactor. Predicted to be exported by the Tat system. The position of the signal peptide cleavage has not been experimentally proven.

Its subcellular location is the periplasm. The enzyme catalyses trimethylamine + 2 Fe(III)-[cytochrome c] + H2O = trimethylamine N-oxide + 2 Fe(II)-[cytochrome c] + 3 H(+). Reduces trimethylamine-N-oxide (TMAO) into trimethylamine; an anaerobic reaction coupled to energy-yielding reactions. In Vibrio vulnificus (strain CMCP6), this protein is Trimethylamine-N-oxide reductase (torA).